Consider the following 90-residue polypeptide: Co-chaperonin GroES (90 aa).

It belongs to the GroES chaperonin family. As to quaternary structure, heptamer of 7 subunits arranged in a ring. Interacts with the chaperonin GroEL.

The protein localises to the cytoplasm. Its function is as follows. Together with the chaperonin GroEL, plays an essential role in assisting protein folding. The GroEL-GroES system forms a nano-cage that allows encapsulation of the non-native substrate proteins and provides a physical environment optimized to promote and accelerate protein folding. GroES binds to the apical surface of the GroEL ring, thereby capping the opening of the GroEL channel. This is Co-chaperonin GroES from Borreliella afzelii (strain PKo) (Borrelia afzelii).